The following is a 160-amino-acid chain: Small ribosomal subunit protein uS19 (160 aa).

It belongs to the universal ribosomal protein uS19 family.

Its function is as follows. Protein S19 forms a complex with S13 that binds strongly to the 16S ribosomal RNA. This chain is Small ribosomal subunit protein uS19, found in Pyrobaculum islandicum (strain DSM 4184 / JCM 9189 / GEO3).